The chain runs to 456 residues: Argininosuccinate lyase (456 aa).

Belongs to the lyase 1 family. Argininosuccinate lyase subfamily.

The protein localises to the cytoplasm. The catalysed reaction is 2-(N(omega)-L-arginino)succinate = fumarate + L-arginine. It participates in amino-acid biosynthesis; L-arginine biosynthesis; L-arginine from L-ornithine and carbamoyl phosphate: step 3/3. In Shewanella pealeana (strain ATCC 700345 / ANG-SQ1), this protein is Argininosuccinate lyase.